The chain runs to 238 residues: Cysteine-rich venom protein 2 (238 aa).

Positions M1–G19 are cleaved as a signal peptide. Residues V38–Y164 form the SCP domain. Intrachain disulfides connect C75–C153, C92–C165, C148–C162, C184–C191, C187–C196, C200–C233, C209–C227, and C218–C231. The ShKT domain maps to C200–C233.

Belongs to the CRISP family. In terms of tissue distribution, expressed by the venom gland.

It localises to the secreted. In terms of biological role, blocks contraction of smooth muscle elicited by high potassium-induced depolarization, but does not block caffeine-stimulated contraction. May target voltage-gated calcium channels (Cav) on smooth muscle. This chain is Cysteine-rich venom protein 2, found in Hydrophis hardwickii (Hardwick's spine-bellied seasnake).